We begin with the raw amino-acid sequence, 553 residues long: Formate--tetrahydrofolate ligase 2 (553 aa).

An ATP-binding site is contributed by 63 to 70 (TSAGEGKS).

This sequence belongs to the formate--tetrahydrofolate ligase family.

It catalyses the reaction (6S)-5,6,7,8-tetrahydrofolate + formate + ATP = (6R)-10-formyltetrahydrofolate + ADP + phosphate. It participates in one-carbon metabolism; tetrahydrofolate interconversion. This chain is Formate--tetrahydrofolate ligase 2, found in Lactobacillus acidophilus (strain ATCC 700396 / NCK56 / N2 / NCFM).